Here is a 689-residue protein sequence, read N- to C-terminus: 7SK snRNA methylphosphate capping enzyme (689 aa).

Position 1 is an N-acetylmethionine (M1). Over residues 1–10 the composition is skewed to basic and acidic residues; that stretch reads MIEMAAEKEP. The tract at residues 1–167 is disordered; the sequence is MIEMAAEKEP…GGGGFKHPAF (167 aa). Residues 52–84 are compositionally biased toward low complexity; sequence GRCAPSAGSPAAAVGRESPGAAATSSSGPQAQQ. Phosphoserine is present on residues S57, S60, S69, and S101. Omega-N-methylarginine is present on R117. Residues S152, S175, and S179 each carry the phosphoserine modification. Phosphothreonine is present on T213. Residues S216, S217, and S254 each carry the phosphoserine modification. Residues 258–269 show a composition bias toward basic residues; that stretch reads TGRKRHRHRGQH. The disordered stretch occupies residues 258–314; it reads TGRKRHRHRGQHHQQQQAAGGSESHPVPPTAPLTPLLHGEGASQQPRHRGQNRDAPQ. At T291 the chain carries Phosphothreonine. Phosphoserine occurs at positions 330 and 344. Positions 332–407 are disordered; it reads LPSALQGPSG…HHPLPAAGFK (76 aa). Residues 338–359 show a composition bias toward low complexity; sequence GPSGSLSAPPAASVISAPPSSS. Basic residues predominate over residues 360-369; that stretch reads SRHRKRRRTS. At S390 the chain carries Phosphoserine. S-adenosyl-L-methionine-binding positions include Y422, R433, 451-453, 474-475, 559-560, and L581; these read GCN, DI, and NY. A Bin3-type SAM domain is found at 431 to 686; the sequence is DGRLRVLKPE…PVYLFHKARS (256 aa). Residue K643 forms a Glycyl lysine isopeptide (Lys-Gly) (interchain with G-Cter in SUMO2) linkage.

Belongs to the methyltransferase superfamily. Core component of the 7SK RNP complex, at least composed of 7SK RNA, LARP7, MEPCE, HEXIM1 (or HEXIM2) and P-TEFb (composed of CDK9 and CCNT1/cyclin-T1). Interacts with METTL16. Interacts with RBM7; upon genotoxic stress this interaction is enhanced, triggering the release of inactive P-TEFb complex from the core, yielding to P-TEFb complex activation. Dephosphorylated at Ser-152 by the PNUTS-PP1 complex, promoting RNA polymerase II transcription pause-release. In terms of tissue distribution, expressed in chronic myeloid leukemia cells, adrenal gland, brain, cerebellum, kidney, lung, mammary gland and testis. Weakly or not expressed in other tissues.

Its subcellular location is the nucleus. It carries out the reaction a 5'-end triphospho-guanosine-ribonucleotide-snRNA + S-adenosyl-L-methionine = a 5'-end methyltriphosphate-guanosine-ribonucleotide-snRNA + S-adenosyl-L-homocysteine. Functionally, S-adenosyl-L-methionine-dependent methyltransferase that adds a methylphosphate cap at the 5'-end of 7SK snRNA (7SK RNA), leading to stabilize it. Also has a non-enzymatic function as part of the 7SK RNP complex: the 7SK RNP complex sequesters the positive transcription elongation factor b (P-TEFb) in a large inactive 7SK RNP complex preventing RNA polymerase II phosphorylation and subsequent transcriptional elongation. The 7SK RNP complex also promotes snRNA gene transcription by RNA polymerase II via interaction with the little elongation complex (LEC). In the 7SK RNP complex, MEPCE is required to stabilize 7SK RNA and facilitate the assembly of 7SK RNP complex. MEPCE has a non-enzymatic function in the 7SK RNP complex; interaction with LARP7 within the 7SK RNP complex occluding its catalytic center. Also required for stability of U6 snRNAs. The sequence is that of 7SK snRNA methylphosphate capping enzyme from Homo sapiens (Human).